The sequence spans 798 residues: Penicillin-binding protein 1A (798 aa).

Topologically, residues 1 to 9 (MIKKILTTC) are cytoplasmic. Residues 10–30 (FGLVFGFCVFGVGLVAIAILV) traverse the membrane as a helical; Signal-anchor for type II membrane protein segment. At 31 to 798 (TYPKLPSLDS…SKQQQLDSLF (768 aa)) the chain is on the periplasmic side. The tract at residues 50 to 218 (LTIYSADGEV…SAYNPIVNPE (169 aa)) is transglycosylase. The active-site Proton donor; for transglycosylase activity is the E88. Positions 378–700 (RRALGFAARA…GTIAVPVWVD (323 aa)) are transpeptidase. S461 (acyl-ester intermediate; for transpeptidase activity) is an active-site residue. Residues 738 to 798 (GLTLDNSGIA…SKQQQLDSLF (61 aa)) are disordered. The span at 768–777 (AADDEVRQDM) shows a compositional bias: basic and acidic residues. Positions 783 to 798 (LPSNTGSKQQQLDSLF) are enriched in polar residues.

In the N-terminal section; belongs to the glycosyltransferase 51 family. This sequence in the C-terminal section; belongs to the transpeptidase family.

It is found in the cell inner membrane. It catalyses the reaction [GlcNAc-(1-&gt;4)-Mur2Ac(oyl-L-Ala-gamma-D-Glu-L-Lys-D-Ala-D-Ala)](n)-di-trans,octa-cis-undecaprenyl diphosphate + beta-D-GlcNAc-(1-&gt;4)-Mur2Ac(oyl-L-Ala-gamma-D-Glu-L-Lys-D-Ala-D-Ala)-di-trans,octa-cis-undecaprenyl diphosphate = [GlcNAc-(1-&gt;4)-Mur2Ac(oyl-L-Ala-gamma-D-Glu-L-Lys-D-Ala-D-Ala)](n+1)-di-trans,octa-cis-undecaprenyl diphosphate + di-trans,octa-cis-undecaprenyl diphosphate + H(+). It carries out the reaction Preferential cleavage: (Ac)2-L-Lys-D-Ala-|-D-Ala. Also transpeptidation of peptidyl-alanyl moieties that are N-acyl substituents of D-alanine.. Its pathway is cell wall biogenesis; peptidoglycan biosynthesis. Its function is as follows. Cell wall formation. Synthesis of cross-linked peptidoglycan from the lipid intermediates. The enzyme has a penicillin-insensitive transglycosylase N-terminal domain (formation of linear glycan strands) and a penicillin-sensitive transpeptidase C-terminal domain (cross-linking of the peptide subunits). This Neisseria meningitidis serogroup A / serotype 4A (strain DSM 15465 / Z2491) protein is Penicillin-binding protein 1A (mrcA).